The chain runs to 363 residues: Phosphoserine aminotransferase (363 aa).

R42 contacts L-glutamate. Residues 76-77 (GR), W102, T156, D175, and Q198 contribute to the pyridoxal 5'-phosphate site. An N6-(pyridoxal phosphate)lysine modification is found at K199. 240 to 241 (NT) is a pyridoxal 5'-phosphate binding site.

Belongs to the class-V pyridoxal-phosphate-dependent aminotransferase family. SerC subfamily. As to quaternary structure, homodimer. It depends on pyridoxal 5'-phosphate as a cofactor.

The protein localises to the cytoplasm. The enzyme catalyses O-phospho-L-serine + 2-oxoglutarate = 3-phosphooxypyruvate + L-glutamate. The catalysed reaction is 4-(phosphooxy)-L-threonine + 2-oxoglutarate = (R)-3-hydroxy-2-oxo-4-phosphooxybutanoate + L-glutamate. Its pathway is amino-acid biosynthesis; L-serine biosynthesis; L-serine from 3-phospho-D-glycerate: step 2/3. It participates in cofactor biosynthesis; pyridoxine 5'-phosphate biosynthesis; pyridoxine 5'-phosphate from D-erythrose 4-phosphate: step 3/5. Functionally, catalyzes the reversible conversion of 3-phosphohydroxypyruvate to phosphoserine and of 3-hydroxy-2-oxo-4-phosphonooxybutanoate to phosphohydroxythreonine. The polypeptide is Phosphoserine aminotransferase (Shewanella sp. (strain W3-18-1)).